The sequence spans 513 residues: MATLFLTILLATVLFLILRIFSHRRNRSHNNRLPPGPNPWPIIGNLPHMGTKPHRTLSAMVTTYGPILHLRLGFVDVVVAASKSVAEQFLKIHDANFASRPPNSGAKHMAYNYQDLVFAPYGHRWRLLRKISSVHLFSAKALEDFKHVRQEEVGTLTRELVRVGTKPVNLGQLVNMCVVNALGREMIGRRLFGADADHKADEFRSMVTEMMALAGVFNIGDFVPSLDWLDLQGVAGKMKRLHKRFDAFLSSILKEHEMNGQDQKHTDMLSTLISLKGTDLDGDGGSLTDTEIKALLLNMFTAGTDTSASTVDWAIAELIRHPDIMVKAQEELDIVVGRDRPVNESDIAQLPYLQAVIKENFRLHPPTPLSLPHIASESCEINGYHIPKGSTLLTNIWAIARDPDQWSDPLAFKPERFLPGGEKSGVDVKGSDFELIPFGAGRRICAGLSLGLRTIQFLTATLVQGFDWELAGGVTPEKLNMEESYGLTLQRAVPLVVHPKPRLAPNVYGLGSG.

Residues 1 to 21 (MATLFLTILLATVLFLILRIF) form a helical membrane-spanning segment. Residues 22 to 513 (SHRRNRSHNN…APNVYGLGSG (492 aa)) are Cytoplasmic-facing. Cys-445 lines the heme pocket.

Belongs to the cytochrome P450 family. The cofactor is heme. High expression in siliques and to a lower extent in stems, flowers and senescing leaves.

The protein localises to the endoplasmic reticulum membrane. The enzyme catalyses a 3'-unsubstituted flavone + reduced [NADPH--hemoprotein reductase] + O2 = a 3'-hydroxyflavone + oxidized [NADPH--hemoprotein reductase] + H2O + H(+). The protein operates within secondary metabolite biosynthesis; flavonoid biosynthesis. Catalyzes the 3'-hydroxylation of the flavonoid B-ring to the 3',4'-hydroxylated state. Convert naringenin to eriodictyol and dihydrokaempferol to dihydroquercetin. The polypeptide is Flavonoid 3'-monooxygenase (CYP75B1) (Arabidopsis thaliana (Mouse-ear cress)).